A 251-amino-acid chain; its full sequence is ATP synthase subunit a (251 aa).

The next 5 helical transmembrane spans lie at 14–34, 78–98, 107–127, 174–194, and 196–216; these read GFVK…LLAV, YLPF…FAVF, SLST…FYGI, MILA…MGVL, and LLIG…YIAA. Residues 224–251 form a disordered region; sequence NAGASDDEGGEDAKSACAAGGKICKHKP.

This sequence belongs to the ATPase A chain family. In terms of assembly, F-type ATPases have 2 components, CF(1) - the catalytic core - and CF(0) - the membrane proton channel. CF(1) has five subunits: alpha(3), beta(3), gamma(1), delta(1), epsilon(1). CF(0) has three main subunits: a(1), b(2) and c(9-12). The alpha and beta chains form an alternating ring which encloses part of the gamma chain. CF(1) is attached to CF(0) by a central stalk formed by the gamma and epsilon chains, while a peripheral stalk is formed by the delta and b chains.

It is found in the cell inner membrane. In terms of biological role, key component of the proton channel; it plays a direct role in the translocation of protons across the membrane. The polypeptide is ATP synthase subunit a (Nitrosospira multiformis (strain ATCC 25196 / NCIMB 11849 / C 71)).